A 247-amino-acid polypeptide reads, in one-letter code: Carboxy-S-adenosyl-L-methionine synthase (247 aa).

S-adenosyl-L-methionine is bound by residues Tyr-40, 65 to 67 (GAS), 90 to 91 (DN), 122 to 123 (DI), Asn-137, and Arg-204.

Belongs to the class I-like SAM-binding methyltransferase superfamily. Cx-SAM synthase family. As to quaternary structure, homodimer.

It catalyses the reaction prephenate + S-adenosyl-L-methionine = carboxy-S-adenosyl-L-methionine + 3-phenylpyruvate + H2O. In terms of biological role, catalyzes the conversion of S-adenosyl-L-methionine (SAM) to carboxy-S-adenosyl-L-methionine (Cx-SAM). The polypeptide is Carboxy-S-adenosyl-L-methionine synthase (Pseudomonas putida (strain ATCC 47054 / DSM 6125 / CFBP 8728 / NCIMB 11950 / KT2440)).